A 59-amino-acid polypeptide reads, in one-letter code: Mitochondrial sheath formation-associated protein (59 aa).

The Mitochondrial intermembrane portion of the chain corresponds to 1-6 (MIVLGW). 2 helical membrane passes run 2 to 22 (IVLG…FPEL) and 7 to 23 (MFFV…PELM). Over 24–40 (PPTLKWQERWPVQESKT) the chain is Cytoplasmic.

As to quaternary structure, interacts with VDAC3.

Its subcellular location is the mitochondrion outer membrane. In terms of biological role, regulates sperm development. May be involved in mitochondrial sheath formation. The polypeptide is Mitochondrial sheath formation-associated protein (Homo sapiens (Human)).